A 486-amino-acid chain; its full sequence is Glutamate--tRNA ligase (486 aa).

The 'HIGH' region motif lies at 11 to 21 (PSPTGLLHIGN). The 'KMSKS' region motif lies at 255–259 (KLSKR). Lysine 258 is an ATP binding site.

Belongs to the class-I aminoacyl-tRNA synthetase family. Glutamate--tRNA ligase type 1 subfamily. In terms of assembly, monomer.

Its subcellular location is the cytoplasm. It carries out the reaction tRNA(Glu) + L-glutamate + ATP = L-glutamyl-tRNA(Glu) + AMP + diphosphate. Functionally, catalyzes the attachment of glutamate to tRNA(Glu) in a two-step reaction: glutamate is first activated by ATP to form Glu-AMP and then transferred to the acceptor end of tRNA(Glu). The protein is Glutamate--tRNA ligase of Streptococcus pneumoniae serotype 19F (strain G54).